A 356-amino-acid chain; its full sequence is Tyrosine recombinase XerS (356 aa).

A Core-binding (CB) domain is found at 16–121 (LMPWFVLEYY…ALSSLYKYLT (106 aa)). One can recognise a Tyr recombinase domain in the interval 169 to 354 (KFLDYVENEY…VNDEQKNALD (186 aa)). Catalysis depends on residues Arg210, Lys234, His306, Arg309, and His332. The active-site O-(3'-phospho-DNA)-tyrosine intermediate is the Tyr341.

This sequence belongs to the 'phage' integrase family. XerS subfamily.

The protein resides in the cytoplasm. With respect to regulation, ftsK is required for recombination. In terms of biological role, site-specific tyrosine recombinase, which acts by catalyzing the cutting and rejoining of the recombining DNA molecules. Essential to convert dimers of the bacterial chromosome into monomers to permit their segregation at cell division. The sequence is that of Tyrosine recombinase XerS from Streptococcus thermophilus (strain CNRZ 1066).